A 57-amino-acid chain; its full sequence is UPF0391 membrane protein HNE_2348 (57 aa).

The next 2 membrane-spanning stretches (helical) occupy residues 4–24 and 27–47; these read WALT…GGIA and AASI…ITFV.

The protein belongs to the UPF0391 family.

The protein resides in the cell membrane. This chain is UPF0391 membrane protein HNE_2348, found in Hyphomonas neptunium (strain ATCC 15444).